The primary structure comprises 858 residues: DNA mismatch repair protein MutS (858 aa).

609-616 provides a ligand contact to ATP; it reads GPNMSGKS.

The protein belongs to the DNA mismatch repair MutS family.

Functionally, this protein is involved in the repair of mismatches in DNA. It is possible that it carries out the mismatch recognition step. This protein has a weak ATPase activity. The polypeptide is DNA mismatch repair protein MutS (Enterococcus faecalis (strain ATCC 700802 / V583)).